Consider the following 284-residue polypeptide: Riboflavin transporter (284 aa).

2 consecutive EamA domains span residues Val2–Ile129 and Leu141–Leu273. 8 helical membrane-spanning segments follow: residues Ser26–Val46, Phe58–Ala78, Val82–Ala102, Leu115–Ser135, Tyr136–Met156, Ala167–Ala187, Ile195–Leu215, and Gly247–Ile267.

Belongs to the drug/metabolite transporter (DMT) superfamily. 10 TMS drug/metabolite exporter (DME) (TC 2.A.7.3) family.

The protein localises to the cell membrane. Transports riboflavin into the cell. The polypeptide is Riboflavin transporter (Brucella anthropi (strain ATCC 49188 / DSM 6882 / CCUG 24695 / JCM 21032 / LMG 3331 / NBRC 15819 / NCTC 12168 / Alc 37) (Ochrobactrum anthropi)).